Here is a 679-residue protein sequence, read N- to C-terminus: PHD finger protein PERSISTENT TAPETAL CELL 1 (679 aa).

Residues 620–670 (VVDCACGAVDDDGERMACCDICEAWQHTRCAGIADTEDAPHVFLCSRCDND) form a PHD-type zinc finger.

Probable transcriptional activator required for tapetal programmed cell death (PCD) and degeneration, and pollen development in anthers. The polypeptide is PHD finger protein PERSISTENT TAPETAL CELL 1 (Oryza sativa subsp. japonica (Rice)).